A 223-amino-acid polypeptide reads, in one-letter code: Exosome complex component RRP46 (223 aa).

Belongs to the RNase PH family. In terms of assembly, component of the RNA exosome complex. Specifically part of the catalytically inactive RNA exosome core complex (Exo-9) which may associate with the catalytic subunits RRP6 and DIS3 in cytoplasmic- and nuclear-specific RNA exosome complex forms. Exo-9 is formed by a hexameric base ring of RNase PH domain-containing subunits and a cap ring consisting of CSL4, RRP4 and RRP40.

It localises to the cytoplasm. The protein localises to the nucleus. The protein resides in the nucleolus. Functionally, non-catalytic component of the RNA exosome complex which has 3'-&gt;5' exoribonuclease activity and participates in a multitude of cellular RNA processing and degradation events. In the nucleus, the RNA exosome complex is involved in proper maturation of stable RNA species such as rRNA, snRNA and snoRNA, in the elimination of RNA processing by-products and non-coding 'pervasive' transcripts, such as antisense RNA species and cryptic unstable transcripts (CUTs), and of mRNAs with processing defects, thereby limiting or excluding their export to the cytoplasm. In the cytoplasm, the RNA exosome complex is involved in general mRNA turnover and in RNA surveillance pathways, preventing translation of aberrant mRNAs. The catalytic inactive RNA exosome core complex of 9 subunits (Exo-9) is proposed to play a pivotal role in the binding and presentation of RNA for ribonucleolysis, and to serve as a scaffold for the association with catalytic subunits and accessory proteins or complexes. RRP46 is part of the hexameric ring of RNase PH domain-containing subunits proposed to form a central channel which threads RNA substrates for degradation. The polypeptide is Exosome complex component RRP46 (RRP46) (Saccharomyces cerevisiae (strain ATCC 204508 / S288c) (Baker's yeast)).